The primary structure comprises 351 residues: Carbamoyl phosphate synthase small chain (351 aa).

The segment at 1–171 is CPSase; sequence MKGIIYLEDG…IIHIAGNGNK (171 aa). Positions 45, 219, and 221 each coordinate L-glutamine. The Glutamine amidotransferase type-1 domain occupies 171 to 351; the sequence is KVAVMDFGIK…TYLFDQFVNL (181 aa). Cys246 acts as the Nucleophile in catalysis. L-glutamine contacts are provided by Leu247, Gln250, Asn288, Gly290, and Tyr291. Residues His331 and Glu333 contribute to the active site.

This sequence belongs to the CarA family. As to quaternary structure, composed of two chains; the small (or glutamine) chain promotes the hydrolysis of glutamine to ammonia, which is used by the large (or ammonia) chain to synthesize carbamoyl phosphate. Tetramer of heterodimers (alpha,beta)4.

It catalyses the reaction hydrogencarbonate + L-glutamine + 2 ATP + H2O = carbamoyl phosphate + L-glutamate + 2 ADP + phosphate + 2 H(+). The enzyme catalyses L-glutamine + H2O = L-glutamate + NH4(+). It participates in amino-acid biosynthesis; L-arginine biosynthesis; carbamoyl phosphate from bicarbonate: step 1/1. Its pathway is pyrimidine metabolism; UMP biosynthesis via de novo pathway; (S)-dihydroorotate from bicarbonate: step 1/3. Its function is as follows. Small subunit of the glutamine-dependent carbamoyl phosphate synthetase (CPSase). CPSase catalyzes the formation of carbamoyl phosphate from the ammonia moiety of glutamine, carbonate, and phosphate donated by ATP, constituting the first step of 2 biosynthetic pathways, one leading to arginine and/or urea and the other to pyrimidine nucleotides. The small subunit (glutamine amidotransferase) binds and cleaves glutamine to supply the large subunit with the substrate ammonia. This chain is Carbamoyl phosphate synthase small chain, found in Clostridium acetobutylicum (strain ATCC 824 / DSM 792 / JCM 1419 / IAM 19013 / LMG 5710 / NBRC 13948 / NRRL B-527 / VKM B-1787 / 2291 / W).